Consider the following 111-residue polypeptide: Nucleoid-associated protein Tmel_0542 (111 aa).

This sequence belongs to the YbaB/EbfC family. In terms of assembly, homodimer.

It localises to the cytoplasm. Its subcellular location is the nucleoid. Binds to DNA and alters its conformation. May be involved in regulation of gene expression, nucleoid organization and DNA protection. The chain is Nucleoid-associated protein Tmel_0542 from Thermosipho melanesiensis (strain DSM 12029 / CIP 104789 / BI429).